The following is a 625-amino-acid chain: Chaperone protein HtpG (625 aa).

Residues 1–330 (MAKQVQNFNA…SSDLSLNVSR (330 aa)) are a; substrate-binding. Positions 331–545 (ELLQQDRQVT…SADPSAHMQK (215 aa)) are b. A c region spans residues 546 to 625 (LMAQMGKEYA…MVQAADSTKH (80 aa)).

This sequence belongs to the heat shock protein 90 family. As to quaternary structure, homodimer.

The protein localises to the cytoplasm. In terms of biological role, molecular chaperone. Has ATPase activity. The sequence is that of Chaperone protein HtpG from Bdellovibrio bacteriovorus (strain ATCC 15356 / DSM 50701 / NCIMB 9529 / HD100).